We begin with the raw amino-acid sequence, 149 residues long: MRAVVQRVIRGEVSVDGEVISSIGKGFVVLVGISVDDNENDVMYMADKIVNLRVFEDEEGKMNLSLLDIGGEVLLVSQFTLLGDVRKGRRPNFMMAQKPEEALKYFNLLVNEIEKRGVSVKTGKFQAMMKVLIENDGPVTILIDSKKIF.

Residues 137-138 carry the Gly-cisPro motif, important for rejection of L-amino acids motif; that stretch reads GP.

This sequence belongs to the DTD family. Homodimer.

It localises to the cytoplasm. It carries out the reaction glycyl-tRNA(Ala) + H2O = tRNA(Ala) + glycine + H(+). The enzyme catalyses a D-aminoacyl-tRNA + H2O = a tRNA + a D-alpha-amino acid + H(+). In terms of biological role, an aminoacyl-tRNA editing enzyme that deacylates mischarged D-aminoacyl-tRNAs. Also deacylates mischarged glycyl-tRNA(Ala), protecting cells against glycine mischarging by AlaRS. Acts via tRNA-based rather than protein-based catalysis; rejects L-amino acids rather than detecting D-amino acids in the active site. By recycling D-aminoacyl-tRNA to D-amino acids and free tRNA molecules, this enzyme counteracts the toxicity associated with the formation of D-aminoacyl-tRNA entities in vivo and helps enforce protein L-homochirality. This is D-aminoacyl-tRNA deacylase from Thermoanaerobacter sp. (strain X514).